Here is a 329-residue protein sequence, read N- to C-terminus: GTP 3',8-cyclase (329 aa).

Residues A8–A234 form the Radical SAM core domain. Position 17 (R17) interacts with GTP. [4Fe-4S] cluster is bound by residues C24 and C28. Y30 lines the S-adenosyl-L-methionine pocket. [4Fe-4S] cluster is bound at residue C31. Position 68 (R68) interacts with GTP. Residue G72 participates in S-adenosyl-L-methionine binding. A GTP-binding site is contributed by T99. Residue S123 coordinates S-adenosyl-L-methionine. K160 contacts GTP. M194 serves as a coordination point for S-adenosyl-L-methionine. C257 and C260 together coordinate [4Fe-4S] cluster. R262–R264 provides a ligand contact to GTP. C274 contributes to the [4Fe-4S] cluster binding site.

Belongs to the radical SAM superfamily. MoaA family. In terms of assembly, monomer and homodimer. [4Fe-4S] cluster serves as cofactor.

The catalysed reaction is GTP + AH2 + S-adenosyl-L-methionine = (8S)-3',8-cyclo-7,8-dihydroguanosine 5'-triphosphate + 5'-deoxyadenosine + L-methionine + A + H(+). The protein operates within cofactor biosynthesis; molybdopterin biosynthesis. Its function is as follows. Catalyzes the cyclization of GTP to (8S)-3',8-cyclo-7,8-dihydroguanosine 5'-triphosphate. The chain is GTP 3',8-cyclase from Salmonella newport (strain SL254).